We begin with the raw amino-acid sequence, 129 residues long: Glycine cleavage system H protein (129 aa).

A Lipoyl-binding domain is found at histidine 24–alanine 106. An N6-lipoyllysine modification is found at lysine 65.

This sequence belongs to the GcvH family. As to quaternary structure, the glycine cleavage system is composed of four proteins: P, T, L and H. Requires (R)-lipoate as cofactor.

Its function is as follows. The glycine cleavage system catalyzes the degradation of glycine. The H protein shuttles the methylamine group of glycine from the P protein to the T protein. The sequence is that of Glycine cleavage system H protein from Hydrogenovibrio crunogenus (strain DSM 25203 / XCL-2) (Thiomicrospira crunogena).